A 371-amino-acid chain; its full sequence is Putative glutamate--cysteine ligase 2 (371 aa).

The protein belongs to the glutamate--cysteine ligase type 2 family. YbdK subfamily.

It catalyses the reaction L-cysteine + L-glutamate + ATP = gamma-L-glutamyl-L-cysteine + ADP + phosphate + H(+). Its function is as follows. ATP-dependent carboxylate-amine ligase which exhibits weak glutamate--cysteine ligase activity. This is Putative glutamate--cysteine ligase 2 from Burkholderia multivorans (strain ATCC 17616 / 249).